The sequence spans 607 residues: Glutamine--fructose-6-phosphate aminotransferase [isomerizing] (607 aa).

Cysteine 2 acts as the Nucleophile; for GATase activity in catalysis. A Glutamine amidotransferase type-2 domain is found at 2–217 (CGIIGIIGND…DGDWAVLTRN (216 aa)). 2 consecutive SIS domains span residues 283–422 (IGID…ARGA) and 455–597 (VCHD…VDQP). Catalysis depends on lysine 602, which acts as the For Fru-6P isomerization activity.

Homodimer.

Its subcellular location is the cytoplasm. The enzyme catalyses D-fructose 6-phosphate + L-glutamine = D-glucosamine 6-phosphate + L-glutamate. In terms of biological role, catalyzes the first step in hexosamine metabolism, converting fructose-6P into glucosamine-6P using glutamine as a nitrogen source. The sequence is that of Glutamine--fructose-6-phosphate aminotransferase [isomerizing] from Brucella melitensis biotype 1 (strain ATCC 23456 / CCUG 17765 / NCTC 10094 / 16M).